The following is a 2298-amino-acid chain: Protein Ycf2 (2298 aa).

Position 1652–1659 (1652–1659) interacts with ATP; it reads GSIGTGRS.

This sequence belongs to the Ycf2 family.

The protein resides in the plastid. Its subcellular location is the chloroplast stroma. In terms of biological role, probable ATPase of unknown function. Its presence in a non-photosynthetic plant (Epifagus virginiana) and experiments in tobacco indicate that it has an essential function which is probably not related to photosynthesis. The protein is Protein Ycf2 of Aethionema cordifolium (Lebanon stonecress).